The sequence spans 507 residues: Proton-coupled zinc antiporter SLC30A1 (507 aa).

Over 1-10 the chain is Cytoplasmic; that stretch reads MGCWGRNRGR. Residues 11–31 traverse the membrane as a helical segment; it reads LLCMLLLTFMFMVLEVVVSRV. Residues 32–35 are Extracellular-facing; sequence TASL. The chain crosses the membrane as a helical span at residues 36–56; that stretch reads AMLSDSFHMLSDVLALVVALV. Zn(2+) contacts are provided by histidine 43 and aspartate 47. Over 57 to 78 the chain is Cytoplasmic; sequence AERFARRTHATQKNTFGWIRAE. A helical transmembrane segment spans residues 79–99; sequence VMGALVNAIFLTGLCFAILLE. Over 100 to 113 the chain is Extracellular; it reads AVERFIEPHEMQQP. A helical membrane pass occupies residues 114-134; sequence LVVLSVGVAGLLVNVLGLCLF. Topologically, residues 135–247 are cytoplasmic; that stretch reads HHHSGEGQGA…RAGQLNMRGV (113 aa). Residues 140 to 218 form a disordered region; that stretch reads EGQGAGHGHS…EKLRSDDPVD (79 aa). The 6 X 2 AA approximate repeats of H-G stretch occupies residues 145 to 156; it reads GHGHSHGHGHGH. Residues 147–165 are compositionally biased toward basic residues; it reads GHSHGHGHGHLAKGARKAG. The span at 188 to 200 shows a compositional bias: polar residues; the sequence is TNTLVANTSNSNG. Residues 204-215 show a composition bias toward basic and acidic residues; that stretch reads DQAEPEKLRSDD. Residues 248–268 form a helical membrane-spanning segment; the sequence is FLHVLGDALGSVIVVVNALVF. Zn(2+) contacts are provided by histidine 250 and aspartate 254. Residues 269-307 are Extracellular-facing; the sequence is YFSWKGCTEDDFCVNPCFPDPCKSSVELMNSTQAPMHEA. N-linked (GlcNAc...) asparagine glycosylation is present at asparagine 298. A helical membrane pass occupies residues 308 to 328; sequence GPCWVLYLDPTLCIIMVCILL. The Cytoplasmic segment spans residues 329-507; it reads YTTYPLLKES…VPNKQPESSL (179 aa). A Phosphoserine modification is found at serine 506.

Belongs to the cation diffusion facilitator (CDF) transporter (TC 2.A.4) family. SLC30A subfamily. Homodimer. Interacts with TMEM163. Interacts and forms a complex with TMC6 and TMC8; the interaction regulates zinc transport into the ER. In terms of tissue distribution, widely expressed. Detected in duodenum and jejunum but not in ileum and colon (at protein level). Expressed by neuroglial cells (at protein level).

The protein localises to the cell membrane. The protein resides in the basolateral cell membrane. It localises to the cytoplasmic vesicle membrane. It is found in the cytoplasm. Its subcellular location is the endoplasmic reticulum membrane. The protein localises to the golgi apparatus membrane. The protein resides in the nucleus membrane. It carries out the reaction Zn(2+)(in) + 2 H(+)(out) = Zn(2+)(out) + 2 H(+)(in). With respect to regulation, calcium-dependent. Zinc ion:proton antiporter that could function at the plasma membrane mediating zinc efflux from cells against its electrochemical gradient protecting them from intracellular zinc accumulation and toxicity. Alternatively, could prevent the transport to the plasma membrane of CACNB2, the L-type calcium channels regulatory subunit, through a yet to be defined mechanism. By modulating the expression of these channels at the plasma membrane, could prevent calcium and zinc influx into cells. By the same mechanism, could also prevent L-type calcium channels-mediated heavy metal influx into cells. In some cells, could also function as a zinc ion:proton antiporter mediating zinc entry into the lumen of cytoplasmic vesicles. In macrophages, can increase zinc ions concentration into the lumen of cytoplasmic vesicles containing engulfed bacteria and could help inactivate them. Forms a complex with TMC6/EVER1 and TMC8/EVER2 at the ER membrane of keratynocytes which facilitates zinc uptake into the ER. Down-regulates the activity of transcription factors induced by zinc and cytokines. The chain is Proton-coupled zinc antiporter SLC30A1 from Rattus norvegicus (Rat).